Reading from the N-terminus, the 159-residue chain is NADH-quinone oxidoreductase subunit I (159 aa).

4Fe-4S ferredoxin-type domains lie at 51 to 80 (RRYENGEERCIACKLCEAICPAQAIVIEAD) and 90 to 119 (TRYDIDMTKCIYCGLCQEACPVDAIVEGPN). The [4Fe-4S] cluster site is built by Cys60, Cys63, Cys66, Cys70, Cys99, Cys102, Cys105, and Cys109.

The protein belongs to the complex I 23 kDa subunit family. In terms of assembly, NDH-1 is composed of 14 different subunits. Subunits NuoA, H, J, K, L, M, N constitute the membrane sector of the complex. It depends on [4Fe-4S] cluster as a cofactor.

Its subcellular location is the cell inner membrane. It carries out the reaction a quinone + NADH + 5 H(+)(in) = a quinol + NAD(+) + 4 H(+)(out). Functionally, NDH-1 shuttles electrons from NADH, via FMN and iron-sulfur (Fe-S) centers, to quinones in the respiratory chain. The immediate electron acceptor for the enzyme in this species is believed to be ubiquinone. Couples the redox reaction to proton translocation (for every two electrons transferred, four hydrogen ions are translocated across the cytoplasmic membrane), and thus conserves the redox energy in a proton gradient. The protein is NADH-quinone oxidoreductase subunit I of Rickettsia felis (strain ATCC VR-1525 / URRWXCal2) (Rickettsia azadi).